The primary structure comprises 164 residues: Transcription factor E (164 aa).

In terms of domain architecture, HTH TFE/IIEalpha-type spans 5–87; that stretch reads NDKVIRGYLR…LWHLDFSDIE (83 aa).

It belongs to the TFE family. As to quaternary structure, monomer. Interaction with RNA polymerase subunits RpoF and RpoE is necessary for Tfe stimulatory transcription activity. Able to interact with Tbp and RNA polymerase in the absence of DNA promoter. Interacts both with the preinitiation and elongation complexes.

Transcription factor that plays a role in the activation of archaeal genes transcribed by RNA polymerase. Facilitates transcription initiation by enhancing TATA-box recognition by TATA-box-binding protein (Tbp), and transcription factor B (Tfb) and RNA polymerase recruitment. Not absolutely required for transcription in vitro, but particularly important in cases where Tbp or Tfb function is not optimal. It dynamically alters the nucleic acid-binding properties of RNA polymerases by stabilizing the initiation complex and destabilizing elongation complexes. Seems to translocate with the RNA polymerase following initiation and acts by binding to the non template strand of the transcription bubble in elongation complexes. This Methanosarcina mazei (strain ATCC BAA-159 / DSM 3647 / Goe1 / Go1 / JCM 11833 / OCM 88) (Methanosarcina frisia) protein is Transcription factor E.